Here is a 433-residue protein sequence, read N- to C-terminus: tRNA-2-methylthio-N(6)-dimethylallyladenosine synthase (433 aa).

The 116-residue stretch at 4–119 (KKLFIQTLGC…ITQAIKTPKF (116 aa)) folds into the MTTase N-terminal domain. [4Fe-4S] cluster-binding residues include C13, C50, C82, C151, C155, and C158. The Radical SAM core domain maps to 137–370 (RNSIYKSYIN…QNRHSEILDE (234 aa)). Positions 373–433 (KKQENKTFKV…KRMVLYGEII (61 aa)) constitute a TRAM domain.

The protein belongs to the methylthiotransferase family. MiaB subfamily. As to quaternary structure, monomer. [4Fe-4S] cluster is required as a cofactor.

The protein resides in the cytoplasm. It carries out the reaction N(6)-dimethylallyladenosine(37) in tRNA + (sulfur carrier)-SH + AH2 + 2 S-adenosyl-L-methionine = 2-methylsulfanyl-N(6)-dimethylallyladenosine(37) in tRNA + (sulfur carrier)-H + 5'-deoxyadenosine + L-methionine + A + S-adenosyl-L-homocysteine + 2 H(+). Its function is as follows. Catalyzes the methylthiolation of N6-(dimethylallyl)adenosine (i(6)A), leading to the formation of 2-methylthio-N6-(dimethylallyl)adenosine (ms(2)i(6)A) at position 37 in tRNAs that read codons beginning with uridine. This Campylobacter jejuni subsp. doylei (strain ATCC BAA-1458 / RM4099 / 269.97) protein is tRNA-2-methylthio-N(6)-dimethylallyladenosine synthase.